Here is a 570-residue protein sequence, read N- to C-terminus: Formate--tetrahydrofolate ligase (570 aa).

Residue 65 to 72 (TPFGEGKT) coordinates ATP.

This sequence belongs to the formate--tetrahydrofolate ligase family.

The catalysed reaction is (6S)-5,6,7,8-tetrahydrofolate + formate + ATP = (6R)-10-formyltetrahydrofolate + ADP + phosphate. Its pathway is one-carbon metabolism; tetrahydrofolate interconversion. The protein is Formate--tetrahydrofolate ligase of Shewanella sediminis (strain HAW-EB3).